Consider the following 492-residue polypeptide: Phosphatidylinositol 4-kinase type 2-beta (492 aa).

A compositionally biased stretch (basic and acidic residues) spans 1–11 (MEPKQTADARD). Positions 1–98 (MEPKQTADAR…SDRENMSGGH (98 aa)) are disordered. A PI3K/PI4K catalytic domain is found at 127–462 (GVFPERISQG…VQMPRVVVER (336 aa)). Residues 133 to 139 (ISQGSSG) form a G-loop region. S140 and K155 together coordinate ATP. The segment at 160–162 (EPY) is important for substrate binding. Residues 168 to 181 (KWTKYFHKICCPCC) form an important for interaction with membranes region. ATP contacts are provided by residues 264–267 (QLFV) and 278–279 (RK). Residues 271–279 (KEADYWLRK) form an important for interaction with membranes region. The tract at residues 308–316 (RNTDRGNDN) is catalytic loop. Residues 353 to 373 (AIDNGLAFPFKHPDEWRAYPF) are activation loop. D355 serves as a coordination point for ATP. The important for interaction with membranes stretch occupies residues 368–377 (WRAYPFHWAW).

It belongs to the PI3/PI4-kinase family. Type II PI4K subfamily.

It is found in the cytoplasm. Its subcellular location is the cytosol. The protein localises to the golgi apparatus membrane. It localises to the endoplasmic reticulum membrane. The protein resides in the cell membrane. It is found in the early endosome membrane. The enzyme catalyses a 1,2-diacyl-sn-glycero-3-phospho-(1D-myo-inositol) + ATP = a 1,2-diacyl-sn-glycero-3-phospho-(1D-myo-inositol 4-phosphate) + ADP + H(+). Its function is as follows. Contributes to the overall PI4-kinase activity of the cell. This contribution may be especially significant in plasma membrane, endosomal and Golgi compartments. The phosphorylation of phosphatidylinositol (PI) to PI4P is the first committed step in the generation of phosphatidylinositol 4,5-bisphosphate (PIP2), a precursor of the second messenger inositol 1,4,5-trisphosphate (InsP3). In Xenopus tropicalis (Western clawed frog), this protein is Phosphatidylinositol 4-kinase type 2-beta (pi4k2b).